Reading from the N-terminus, the 438-residue chain is Ribosomal protein uS12 methylthiotransferase RimO (438 aa).

The region spanning 5–116 (PTIAISHLGC…IVQVIQRVEN (112 aa)) is the MTTase N-terminal domain. The [4Fe-4S] cluster site is built by cysteine 14, cysteine 50, cysteine 79, cysteine 154, cysteine 158, and cysteine 161. Positions 140 to 369 (TTSEGVAYLR…MQIQQPISLQ (230 aa)) constitute a Radical SAM core domain. One can recognise a TRAM domain in the interval 372 to 438 (CACIGDIVDV…IYDLYGEVIN (67 aa)).

This sequence belongs to the methylthiotransferase family. RimO subfamily. Requires [4Fe-4S] cluster as cofactor.

It localises to the cytoplasm. It carries out the reaction L-aspartate(89)-[ribosomal protein uS12]-hydrogen + (sulfur carrier)-SH + AH2 + 2 S-adenosyl-L-methionine = 3-methylsulfanyl-L-aspartate(89)-[ribosomal protein uS12]-hydrogen + (sulfur carrier)-H + 5'-deoxyadenosine + L-methionine + A + S-adenosyl-L-homocysteine + 2 H(+). Its function is as follows. Catalyzes the methylthiolation of an aspartic acid residue of ribosomal protein uS12. The sequence is that of Ribosomal protein uS12 methylthiotransferase RimO from Gloeothece citriformis (strain PCC 7424) (Cyanothece sp. (strain PCC 7424)).